A 97-amino-acid chain; its full sequence is Large ribosomal subunit protein eL21 (97 aa).

Belongs to the eukaryotic ribosomal protein eL21 family.

This chain is Large ribosomal subunit protein eL21 (rpl21e), found in Archaeoglobus fulgidus (strain ATCC 49558 / DSM 4304 / JCM 9628 / NBRC 100126 / VC-16).